The sequence spans 220 residues: Inner kinetochore subunit fta3 (220 aa).

It belongs to the CENP-H/MCM16 family. In terms of assembly, component of the inner kinetochore constitutive centromere-associated network (CCAN) (also known as central kinetochore Sim4 complex in fission yeast), which is composed of at least cnl2, cnp3, cnp20, fta1, fta2, fta3, fta4, fta6, fta7, mal2, mhf1, mhf2, mis6, mis15, mis17, sim4 and wip1.

The protein localises to the nucleus. It is found in the chromosome. Its subcellular location is the centromere. The protein resides in the kinetochore. In terms of biological role, component of the kinetochore, a multiprotein complex that assembles on centromeric DNA and attaches chromosomes to spindle microtubules, mediating chromosome segregation and sister chromatid segregation during meiosis and mitosis. Component of the inner kinetochore constitutive centromere-associated network (CCAN), which serves as a structural platform for outer kinetochore assembly. Fta2, fta3 and fta4 associate with the central core (cnt) and inner repeat (inr) region of the centromere. The sequence is that of Inner kinetochore subunit fta3 (fta3) from Schizosaccharomyces pombe (strain 972 / ATCC 24843) (Fission yeast).